Reading from the N-terminus, the 239-residue chain is Peptidase E (239 aa).

Catalysis depends on charge relay system residues Ser122, Asp137, and His159.

This sequence belongs to the peptidase S51 family.

It localises to the cytoplasm. It catalyses the reaction Dipeptidase E catalyzes the hydrolysis of dipeptides Asp-|-Xaa. It does not act on peptides with N-terminal Glu, Asn or Gln, nor does it cleave isoaspartyl peptides.. Its function is as follows. Hydrolyzes dipeptides containing N-terminal aspartate residues. May play a role in allowing the cell to use peptide aspartate to spare carbon otherwise required for the synthesis of the aspartate family of amino acids. This Shewanella baltica (strain OS195) protein is Peptidase E.